The chain runs to 251 residues: MFGLQHIWDCILQYEAQLRSPFFPVLFSITVYLSFCLPFVLLDALSPKVELIRRYKIQQKASVSWTMMWSCLALSLYNHVVYIFPLSVLHWYWRPVSYLAEAPGVLRVVWDLAACLLLFDFQYFVWHLLHHKVPWLYRTFHKVHHKYTSTFALATEYSGAWETLSLGFFAAVNPMLLGVHPMTEMLFHMLNMWLSVEDHCGYDLPWATHRLMPFGLYGGAPHHDVHHQKFKSNYAPYFTHWDKLFGTLHFE.

3 helical membrane-spanning segments follow: residues 22-42 (FFPVLFSITVYLSFCLPFVLL), 69-89 (WSCLALSLYNHVVYIFPLSVL), and 108-128 (VVWDLAACLLLFDFQYFVWHL). The 135-residue stretch at 113-247 (AACLLLFDFQ…FTHWDKLFGT (135 aa)) folds into the Fatty acid hydroxylase domain. The Histidine box-1 motif lies at 126–130 (WHLLH). Residues 141–145 (HKVHH) carry the Histidine box-2 motif. The Histidine box-3 motif lies at 222-228 (HHDVHHQ).

The protein belongs to the sterol desaturase family. Fe cation is required as a cofactor.

The protein localises to the endoplasmic reticulum membrane. The enzyme catalyses cholesterol + AH2 + O2 = 25-hydroxycholesterol + A + H2O. It carries out the reaction cholesterol + NADPH + O2 + H(+) = 25-hydroxycholesterol + NADP(+) + H2O. Functionally, catalyzes the formation of 25-hydroxycholesterol from cholesterol, leading to repress cholesterol biosynthetic enzymes. Plays a key role in cell positioning and movement in lymphoid tissues: 25-hydroxycholesterol is an intermediate in biosynthesis of 7-alpha,25-dihydroxycholesterol (7-alpha,25-OHC), an oxysterol that acts as a ligand for the G protein-coupled receptor GPR183/EBI2, a chemotactic receptor for a number of lymphoid cells. May play an important role in regulating lipid metabolism by synthesizing a corepressor that blocks sterol regulatory element binding protein (SREBP) processing. In testis, production of 25-hydroxycholesterol by macrophages may play a role in Leydig cell differentiation. The protein is Cholesterol 25-hydroxylase-like protein (ch25h) of Danio rerio (Zebrafish).